The sequence spans 355 residues: Eukaryotic initiation factor 4A-13 (355 aa).

A Q motif motif is present at residues 40–68 (DSFDAMGLQENLLRGIYAYGFEKPSAIQQ). In terms of domain architecture, Helicase ATP-binding spans 71–241 (IVPFCKGLDV…RKFMNQPVRI (171 aa)). 84–91 (AQSGTGKT) serves as a coordination point for ATP. A DEAD box motif is present at residues 189–192 (DEAD). The Helicase C-terminal domain occupies 252–355 (GIKQFYVNVD…QQVSLVINYD (104 aa)).

It belongs to the DEAD box helicase family. eIF4A subfamily. EIF4F is a multi-subunit complex, the composition of which varies with external and internal environmental conditions. It is composed of at least EIF4A, EIF4E and EIF4G.

It carries out the reaction ATP + H2O = ADP + phosphate + H(+). Its function is as follows. ATP-dependent RNA helicase which is a subunit of the eIF4F complex involved in cap recognition and is required for mRNA binding to ribosome. In the current model of translation initiation, eIF4A unwinds RNA secondary structures in the 5'-UTR of mRNAs which is necessary to allow efficient binding of the small ribosomal subunit, and subsequent scanning for the initiator codon. This Nicotiana tabacum (Common tobacco) protein is Eukaryotic initiation factor 4A-13.